Consider the following 70-residue polypeptide: Movement protein TGBp3 (70 aa).

The Lumenal segment spans residues 1-6 (MEANTY). Residues 7–27 (LNAIILVLVVTIIAVISTSLV) traverse the membrane as a helical segment. Over 28 to 70 (RTEPCVIKITGESITVLACKLDAETIRAIADLKPLSVERLSFH) the chain is Cytoplasmic.

The protein belongs to the Tymovirales TGBp3 protein family.

It is found in the host endoplasmic reticulum membrane. Its function is as follows. Plays a role in viral cell-to-cell propagation, by facilitating genome transport to neighboring plant cells through plasmosdesmata. May induce the formation of granular vesicles derived from the Endoplasmic reticulum, which align on actin filaments. This Potato virus X (PVX) protein is Movement protein TGBp3.